The following is a 183-amino-acid chain: DELTA-miturgitoxin-Cp1a (183 aa).

An N-terminal signal peptide occupies residues 1–20 (MKFSLFFSVFFLAVLHACLS). Positions 21–47 (ESEIDLEDEEHFMSSDSFLSEIQDESR) are excised as a propeptide. The Processing quadruplet motif motif lies at 44 to 47 (DESR). 8 cysteine pairs are disulfide-bonded: Cys51–Cys66, Cys58–Cys75, Cys65–Cys88, Cys77–Cys86, Cys115–Cys130, Cys122–Cys139, Cys129–Cys157, and Cys141–Cys155. Domain repeat units follow at residues 51 to 77 (CIERNKECTNDRHGCCRGKIFKDKCTC) and 115 to 141 (CVPKHADCSKRKDDCCKGGIFKYQCKC). Residues 51–141 (CIERNKECTN…GGIFKYQCKC (91 aa)) are 2 X approximate repeats with cysteine pattern C-C-CC-C-C. Residues 164–177 (QAIEGALRIAKKLI) form a predicted alpha-helix region. A Tryptophan amide modification is found at Trp181.

This sequence belongs to the neurotoxin 19 (CSTX) family. Double-CSTX subfamily. Post-translationally, cleavage of the propeptide depends on the processing quadruplet motif (XXXR, with at least one of X being E). Expressed by the venom gland.

It localises to the secreted. The protein resides in the target cell membrane. Its function is as follows. Spider venom toxin that exhibits cytolytic activity by forming an alpha-helix across the membrane. Lethal to insect larvae. Causes instant paralysis and death in the larvae of the flesh fly (S.carnaria) at doses of 20 ug/g, at doses of less than 10 ug/g causes reversible paralysis. Has cytolytic activity against insect Sf9 cells. Causes stable and irreversible depolarization of fly muscle fibers, leading to contracture at higher toxin concentrations. Destabilizes membranes. This Cheiracanthium punctorium (Yellow sac spider) protein is DELTA-miturgitoxin-Cp1a.